We begin with the raw amino-acid sequence, 349 residues long: GDSL esterase/lipase At1g58525 (349 aa).

The first 19 residues, 1–19 (MKLQILLLALVLIAVEANA), serve as a signal peptide directing secretion. Residue asparagine 25 is glycosylated (N-linked (GlcNAc...) asparagine). Serine 37 serves as the catalytic Nucleophile. Asparagine 316 is a glycosylation site (N-linked (GlcNAc...) asparagine). Catalysis depends on residues aspartate 324 and histidine 327.

Belongs to the 'GDSL' lipolytic enzyme family.

The protein resides in the secreted. The protein is GDSL esterase/lipase At1g58525 of Arabidopsis thaliana (Mouse-ear cress).